Here is a 131-residue protein sequence, read N- to C-terminus: Profilin-3 (131 aa).

It belongs to the profilin family. As to quaternary structure, occurs in many kinds of cells as a complex with monomeric actin in a 1:1 ratio.

Its subcellular location is the cytoplasm. It localises to the cytoskeleton. Binds to actin and affects the structure of the cytoskeleton. At high concentrations, profilin prevents the polymerization of actin, whereas it enhances it at low concentrations. By binding to PIP2, it inhibits the formation of IP3 and DG. This Hevea brasiliensis (Para rubber tree) protein is Profilin-3.